Consider the following 362-residue polypeptide: MPDSTADPSTADEVLARLHFDLPEDRIAQTGAEPRDTSRLMVVGEQIKHRMFRDLPDLLRPSDLLVFNESRVIPARVLARKPVVNGFGGGQVEVLLLREEFDVGANVWSAYLKPAKRAGHELWLGENEATGHRAEVVGVLDDGARLLRFDHDIKPHLDEIGRLPLPPYINAGDSDETWRERYQTVYAKTPGSVAAPTAGLHFTPELLARLDEMGVERASVTLHVGAGTFKPIQGPVADHVMHAERYEVSETNAAAITRAKAEGRRVVAVGTTTVRTLESAWDGAAVRAGAGETRIFITPGTRVEVPDLLITNLHLPGSTLLLLVAAFAGEDRIRAAYDAALSQDYRFYSLGDAMLLERLTSA.

This sequence belongs to the QueA family. As to quaternary structure, monomer.

Its subcellular location is the cytoplasm. It carries out the reaction 7-aminomethyl-7-carbaguanosine(34) in tRNA + S-adenosyl-L-methionine = epoxyqueuosine(34) in tRNA + adenine + L-methionine + 2 H(+). The protein operates within tRNA modification; tRNA-queuosine biosynthesis. Functionally, transfers and isomerizes the ribose moiety from AdoMet to the 7-aminomethyl group of 7-deazaguanine (preQ1-tRNA) to give epoxyqueuosine (oQ-tRNA). This chain is S-adenosylmethionine:tRNA ribosyltransferase-isomerase, found in Deinococcus radiodurans (strain ATCC 13939 / DSM 20539 / JCM 16871 / CCUG 27074 / LMG 4051 / NBRC 15346 / NCIMB 9279 / VKM B-1422 / R1).